The primary structure comprises 151 residues: Large ribosomal subunit protein uL13 (151 aa).

This sequence belongs to the universal ribosomal protein uL13 family. In terms of assembly, part of the 50S ribosomal subunit.

In terms of biological role, this protein is one of the early assembly proteins of the 50S ribosomal subunit, although it is not seen to bind rRNA by itself. It is important during the early stages of 50S assembly. The sequence is that of Large ribosomal subunit protein uL13 from Synechococcus sp. (strain JA-3-3Ab) (Cyanobacteria bacterium Yellowstone A-Prime).